The following is a 362-amino-acid chain: Cobalt-precorrin-5B C(1)-methyltransferase (362 aa).

This sequence belongs to the CbiD family.

It catalyses the reaction Co-precorrin-5B + S-adenosyl-L-methionine = Co-precorrin-6A + S-adenosyl-L-homocysteine. The protein operates within cofactor biosynthesis; adenosylcobalamin biosynthesis; cob(II)yrinate a,c-diamide from sirohydrochlorin (anaerobic route): step 6/10. In terms of biological role, catalyzes the methylation of C-1 in cobalt-precorrin-5B to form cobalt-precorrin-6A. The sequence is that of Cobalt-precorrin-5B C(1)-methyltransferase from Methanocaldococcus jannaschii (strain ATCC 43067 / DSM 2661 / JAL-1 / JCM 10045 / NBRC 100440) (Methanococcus jannaschii).